The primary structure comprises 354 residues: Inositol-tetrakisphosphate 1-kinase 1 (354 aa).

Residues 1-16 (MRVHEEASEDKEREVE) show a composition bias toward basic and acidic residues. Residues 1 to 24 (MRVHEEASEDKEREVEEAPDLMPL) form a disordered region. The 1D-myo-inositol 1,3,4-trisphosphate site is built by K53 and K95. ATP is bound by residues R130 and K180. One can recognise an ATP-grasp domain in the interval 140 to 347 (LNLSNAYGEV…FLLSLVQNKY (208 aa)). 1D-myo-inositol 1,3,4-trisphosphate-binding residues include H191 and K223. ATP is bound by residues 212 to 223 (QEFVNHGGILFK) and S238. Residues D303, D318, and N320 each contribute to the Mg(2+) site. N320 provides a ligand contact to 1D-myo-inositol 1,3,4-trisphosphate.

Belongs to the ITPK1 family. In terms of assembly, monomer. Mg(2+) serves as cofactor. In terms of tissue distribution, expressed in roots, leaves, flowers, anthers and embryos.

The enzyme catalyses 1D-myo-inositol 3,4,5,6-tetrakisphosphate + ATP = 1D-myo-inositol 1,3,4,5,6-pentakisphosphate + ADP + H(+). The catalysed reaction is 1D-myo-inositol 1,3,4-trisphosphate + ATP = 1D-myo-inositol 1,3,4,5-tetrakisphosphate + ADP + H(+). It carries out the reaction 1D-myo-inositol 1,3,4-trisphosphate + ATP = 1D-myo-inositol 1,3,4,6-tetrakisphosphate + ADP + H(+). Kinase that can phosphorylate various inositol polyphosphate such as Ins(3,4,5,6)P4 or Ins(1,3,4)P3 and participates in phytic acid biosynthesis in developing seeds. Phytic acid is the primary storage form of phosphorus in cereal grains and other plant seeds. The sequence is that of Inositol-tetrakisphosphate 1-kinase 1 from Oryza sativa subsp. japonica (Rice).